The following is a 784-amino-acid chain: LPS-assembly protein LptD (784 aa).

The N-terminal stretch at 1–24 (MKKRIPTLLATMIATALYSQQGLA) is a signal peptide. Cystine bridges form between Cys-31–Cys-724 and Cys-173–Cys-725.

This sequence belongs to the LptD family. In terms of assembly, component of the lipopolysaccharide transport and assembly complex. Interacts with LptE and LptA. In terms of processing, contains two intramolecular disulfide bonds.

The protein resides in the cell outer membrane. Its function is as follows. Together with LptE, is involved in the assembly of lipopolysaccharide (LPS) at the surface of the outer membrane. In Escherichia coli O6:K15:H31 (strain 536 / UPEC), this protein is LPS-assembly protein LptD.